Reading from the N-terminus, the 354-residue chain is Protein-glutamate methylesterase/protein-glutamine glutaminase of group 3 operon (354 aa).

The 119-residue stretch at 3–121 (RILLATSTVE…MQLEQPAIEK (119 aa)) folds into the Response regulatory domain. The CheB-type methylesterase domain occupies 158 to 340 (PIGIVGIAAS…LESIAENITA (183 aa)). Catalysis depends on residues Ser-167, His-194, and Asp-287.

It belongs to the CheB family.

Its subcellular location is the cytoplasm. The enzyme catalyses [protein]-L-glutamate 5-O-methyl ester + H2O = L-glutamyl-[protein] + methanol + H(+). The catalysed reaction is L-glutaminyl-[protein] + H2O = L-glutamyl-[protein] + NH4(+). Functionally, involved in chemotaxis. Part of a chemotaxis signal transduction system that modulates chemotaxis in response to various stimuli. Catalyzes the demethylation of specific methylglutamate residues introduced into the chemoreceptors (methyl-accepting chemotaxis proteins or MCP) by CheR. Also mediates the irreversible deamidation of specific glutamine residues to glutamic acid. This is Protein-glutamate methylesterase/protein-glutamine glutaminase of group 3 operon from Rhizobium meliloti (strain 1021) (Ensifer meliloti).